We begin with the raw amino-acid sequence, 61 residues long: uncharacterized protein (61 aa).

The chain crosses the membrane as a helical span at residues 10 to 27 (RILFFFFIFFTLFLFNIP).

It localises to the membrane. This is an uncharacterized protein from Dictyostelium discoideum (Social amoeba).